The primary structure comprises 191 residues: Large ribosomal subunit protein bL9 (191 aa).

Residues 171-191 (EDALKPEDFFNPEAELESEEE) are disordered.

This sequence belongs to the bacterial ribosomal protein bL9 family.

Binds to the 23S rRNA. This Rhizobium meliloti (strain 1021) (Ensifer meliloti) protein is Large ribosomal subunit protein bL9.